The chain runs to 378 residues: Chaperone protein DnaJ (378 aa).

The region spanning Asp5–Gly70 is the J domain. The CR-type zinc-finger motif lies at Gly133–Ser211. Zn(2+)-binding residues include Cys146, Cys149, Cys163, Cys166, Cys185, Cys188, Cys199, and Cys202. CXXCXGXG motif repeat units follow at residues Cys146–Gly153, Cys163–Gly170, Cys185–Gly192, and Cys199–Gly206.

This sequence belongs to the DnaJ family. Homodimer. Zn(2+) serves as cofactor.

The protein localises to the cytoplasm. In terms of biological role, participates actively in the response to hyperosmotic and heat shock by preventing the aggregation of stress-denatured proteins and by disaggregating proteins, also in an autonomous, DnaK-independent fashion. Unfolded proteins bind initially to DnaJ; upon interaction with the DnaJ-bound protein, DnaK hydrolyzes its bound ATP, resulting in the formation of a stable complex. GrpE releases ADP from DnaK; ATP binding to DnaK triggers the release of the substrate protein, thus completing the reaction cycle. Several rounds of ATP-dependent interactions between DnaJ, DnaK and GrpE are required for fully efficient folding. Also involved, together with DnaK and GrpE, in the DNA replication of plasmids through activation of initiation proteins. The chain is Chaperone protein DnaJ from Shewanella sediminis (strain HAW-EB3).